Here is a 431-residue protein sequence, read N- to C-terminus: MLDPNLLRNELDAVAEKLLARRGFKLDVETLRKQEERRKVLQVETESLQAERNSRSKEIGAAKARGEDIEPLRREVNTLGEKLDTAKAELDQLQNEIRDLALTIPNLPDDSVPLGKDESQNKEVTRWGEPRKYDFAVRDHVELGEMAGGLDFAAAVKLTGARFVVMKGQIARLHRALAQFMLDLHTQQHGYQEAYVPYLVNHATLYGTGQLPKFGEDLFHTNPLSEEAESSQYALIPTAEVPLTNLVRDEILDEESLPLKMTAHTPCFRSEAGSYGRDTRGLIRMHQFDKVELVQIVRPEDSMQALEELTTHAETVLQLLKLPYRKVLLCTGDMGFGSTKTYDLEVWLPAQDTYREISSCSNMWDFQARRMQARCRSKSDKKTRLVHTLNGSGLAVGRTLVAVLENYQQADGRIEIPEVLRPYMGGLEFIG.

Residue 238 to 240 participates in L-serine binding; that stretch reads TAE. 269–271 contributes to the ATP binding site; it reads RSE. Glutamate 292 is a binding site for L-serine. 356-359 is a binding site for ATP; it reads EISS. Serine 392 provides a ligand contact to L-serine.

This sequence belongs to the class-II aminoacyl-tRNA synthetase family. Type-1 seryl-tRNA synthetase subfamily. Homodimer. The tRNA molecule binds across the dimer.

Its subcellular location is the cytoplasm. The enzyme catalyses tRNA(Ser) + L-serine + ATP = L-seryl-tRNA(Ser) + AMP + diphosphate + H(+). It carries out the reaction tRNA(Sec) + L-serine + ATP = L-seryl-tRNA(Sec) + AMP + diphosphate + H(+). It participates in aminoacyl-tRNA biosynthesis; selenocysteinyl-tRNA(Sec) biosynthesis; L-seryl-tRNA(Sec) from L-serine and tRNA(Sec): step 1/1. In terms of biological role, catalyzes the attachment of serine to tRNA(Ser). Is also able to aminoacylate tRNA(Sec) with serine, to form the misacylated tRNA L-seryl-tRNA(Sec), which will be further converted into selenocysteinyl-tRNA(Sec). This Pectobacterium atrosepticum (strain SCRI 1043 / ATCC BAA-672) (Erwinia carotovora subsp. atroseptica) protein is Serine--tRNA ligase.